Here is a 448-residue protein sequence, read N- to C-terminus: tRNA(Ile)-lysidine synthase (448 aa).

25–30 (SGGSDS) contacts ATP.

This sequence belongs to the tRNA(Ile)-lysidine synthase family.

It localises to the cytoplasm. It catalyses the reaction cytidine(34) in tRNA(Ile2) + L-lysine + ATP = lysidine(34) in tRNA(Ile2) + AMP + diphosphate + H(+). Ligates lysine onto the cytidine present at position 34 of the AUA codon-specific tRNA(Ile) that contains the anticodon CAU, in an ATP-dependent manner. Cytidine is converted to lysidine, thus changing the amino acid specificity of the tRNA from methionine to isoleucine. The chain is tRNA(Ile)-lysidine synthase from Brucella abortus (strain S19).